Consider the following 252-residue polypeptide: uncharacterized protein (252 aa).

The signal sequence occupies residues 1 to 25; it reads MRKKKFLSRFAFGSLFLLCGTILSA. A lipid anchor (N-palmitoyl cysteine) is attached at cysteine 26. Cysteine 26 carries the S-diacylglycerol cysteine lipid modification.

It belongs to the MG439/MG440 family.

The protein localises to the cell membrane. This is an uncharacterized protein from Mycoplasma pneumoniae (strain ATCC 29342 / M129 / Subtype 1) (Mycoplasmoides pneumoniae).